A 54-amino-acid chain; its full sequence is UPF0391 membrane protein Aave_3864 (54 aa).

Helical transmembrane passes span 5–25 (AVVF…GIAA) and 28–48 (VGIA…TFVL).

Belongs to the UPF0391 family.

It is found in the cell membrane. In Paracidovorax citrulli (strain AAC00-1) (Acidovorax citrulli), this protein is UPF0391 membrane protein Aave_3864.